The sequence spans 503 residues: Transcriptional regulator LovE (503 aa).

The zn(2)-C6 fungal-type DNA-binding region spans 35 to 67 (CDRCHAQKIKCTGNKEVTGRAPCQRCQQAGLRC). Disordered stretches follow at residues 89 to 124 (ADPD…RQFL) and 331 to 358 (SHMS…HSSV). The segment covering 339-357 (SRSQSPSRDDTSSSSGHSS) has biased composition (low complexity).

The protein localises to the nucleus. Its function is as follows. Transcription factor that regulates the expression of the he gene cluster that mediates the biosynthesis of lovastatin (also known as mevinolin, mevacor or monacolin K), a hypolipidemic inhibitor of (3S)-hydroxymethylglutaryl-coenzyme A (HMG-CoA) reductase (HMGR). In Aspergillus terreus, this protein is Transcriptional regulator LovE.